A 447-amino-acid polypeptide reads, in one-letter code: Exodeoxyribonuclease 7 large subunit (447 aa).

Belongs to the XseA family. As to quaternary structure, heterooligomer composed of large and small subunits.

The protein resides in the cytoplasm. It carries out the reaction Exonucleolytic cleavage in either 5'- to 3'- or 3'- to 5'-direction to yield nucleoside 5'-phosphates.. In terms of biological role, bidirectionally degrades single-stranded DNA into large acid-insoluble oligonucleotides, which are then degraded further into small acid-soluble oligonucleotides. In Exiguobacterium sibiricum (strain DSM 17290 / CCUG 55495 / CIP 109462 / JCM 13490 / 255-15), this protein is Exodeoxyribonuclease 7 large subunit.